We begin with the raw amino-acid sequence, 208 residues long: Small ribosomal subunit protein uS4 (208 aa).

Residues 98 to 159 (LRLDNVAYRL…AARTHIRIAA (62 aa)) form the S4 RNA-binding domain.

It belongs to the universal ribosomal protein uS4 family. In terms of assembly, part of the 30S ribosomal subunit. Contacts protein S5. The interaction surface between S4 and S5 is involved in control of translational fidelity.

One of the primary rRNA binding proteins, it binds directly to 16S rRNA where it nucleates assembly of the body of the 30S subunit. In terms of biological role, with S5 and S12 plays an important role in translational accuracy. The chain is Small ribosomal subunit protein uS4 from Acidithiobacillus ferrooxidans (strain ATCC 23270 / DSM 14882 / CIP 104768 / NCIMB 8455) (Ferrobacillus ferrooxidans (strain ATCC 23270)).